Consider the following 792-residue polypeptide: DEAD-box ATP-dependent RNA helicase 40 (792 aa).

Residues 1–16 (MSAGTAPAAPRYAPDD) are compositionally biased toward low complexity. Disordered regions lie at residues 1 to 25 (MSAG…PWRG) and 44 to 118 (TQYE…PLPA). One can recognise a WW domain in the interval 17-51 (PSLPKPWRGLVDGTTGYLYYWNPETNITQYEKPLP). Over residues 52–68 (PEDQLPPPPPLPPPPPR) the composition is skewed to pro residues. 2 stretches are compositionally biased toward basic and acidic residues: residues 70–80 (GRGDRDRDRRD) and 88–108 (PRRD…DHRS). The Q motif signature appears at 150–178 (TSFETGGFPPEILKEIQRAGFSSPTPIQA). Residues 181–355 (WPIALQCQDV…EDLLVHPVQV (175 aa)) form the Helicase ATP-binding domain. 194–201 (AKTGSGKT) serves as a coordination point for ATP. The short motif at 303–306 (DEAD) is the DEAD box element. The 145-residue stretch at 384–528 (RLEQILRSQD…RVPRDLADMA (145 aa)) folds into the Helicase C-terminal domain. Positions 523–792 (DLADMASRGG…NATVQNGGDN (270 aa)) are disordered. 2 stretches are compositionally biased toward basic and acidic residues: residues 543-560 (TRSD…RYGG) and 572-588 (DSSR…DGRS). Basic residues-rich tracts occupy residues 589–599 (RRSGRGRSRSR) and 609–654 (RSPK…RRHE). The span at 668 to 708 (GHGERKRTPEADPSRNHTNHSDPKDDRHPEDGKVGKVDLDR) shows a compositional bias: basic and acidic residues. The segment covering 725–739 (GKTSRSVSPGNQVEG) has biased composition (polar residues). Residues 764–777 (DEEEGMIDEDGEIA) are compositionally biased toward acidic residues.

It belongs to the DEAD box helicase family. DDX5/DBP2 subfamily.

It localises to the nucleus. It catalyses the reaction ATP + H2O = ADP + phosphate + H(+). ATP-dependent RNA helicase involved nonsense-mediated mRNA decay and ribosome biogenesis through rRNA processing. This is DEAD-box ATP-dependent RNA helicase 40 from Oryza sativa subsp. japonica (Rice).